The chain runs to 469 residues: Glutamate--tRNA ligase (469 aa).

Positions 9 to 19 (PSPTGFLHVGG) match the 'HIGH' region motif. Positions 98, 100, 125, and 127 each coordinate Zn(2+). A 'KMSKS' region motif is present at residues 236 to 240 (KLSKR). ATP is bound at residue Lys239.

It belongs to the class-I aminoacyl-tRNA synthetase family. Glutamate--tRNA ligase type 1 subfamily. Monomer. The cofactor is Zn(2+).

The protein resides in the cytoplasm. It carries out the reaction tRNA(Glu) + L-glutamate + ATP = L-glutamyl-tRNA(Glu) + AMP + diphosphate. Catalyzes the attachment of glutamate to tRNA(Glu) in a two-step reaction: glutamate is first activated by ATP to form Glu-AMP and then transferred to the acceptor end of tRNA(Glu). This chain is Glutamate--tRNA ligase, found in Shewanella sp. (strain ANA-3).